The primary structure comprises 2019 residues: Sodium channel protein type 5 subunit alpha (2019 aa).

Over 1–129 (MANFLLPRGT…VRRAAVKILV (129 aa)) the chain is Cytoplasmic. Residues 27–66 (RMAEKQARGSATSQESREGLPEEEAPRPQLDLQASKKLPD) are disordered. At Ser-36 the chain carries Phosphoserine. Thr-38 carries the post-translational modification Phosphothreonine. The segment covering 41 to 52 (ESREGLPEEEAP) has biased composition (basic and acidic residues). The stretch at 113-420 (VLSPFHPVRR…VVAMAYEEQN (308 aa)) is one I repeat. The chain crosses the membrane as a helical span at residues 130-149 (HSLFSMLIMCTILTNCVFMA). The Extracellular segment spans residues 150–157 (QHDPPPWT). Residues 158–179 (KYVEYTFTAIYTFESLVKILAR) traverse the membrane as a helical segment. Topologically, residues 180–188 (GFCLHAFTF) are cytoplasmic. A helical membrane pass occupies residues 189–209 (LRDPWNWLDFSVIVMAYTTEF). Over 210-216 (VDLGNVS) the chain is Extracellular. A glycan (N-linked (GlcNAc...) asparagine) is linked at Asn-214. A helical membrane pass occupies residues 217 to 236 (ALRTFRVLRALKTISVISGL). Over 237 to 249 (KTIVGALIQSVKK) the chain is Cytoplasmic. A helical transmembrane segment spans residues 250–272 (LADVMVLTVFCLSVFALIGLQLF). Residues 273–357 (MGNLRHKCVR…PDHGYTSFDS (85 aa)) lie on the Extracellular side of the membrane. The cysteines at positions 280 and 335 are disulfide-linked. 5 N-linked (GlcNAc...) asparagine glycosylation sites follow: Asn-283, Asn-288, Asn-291, Asn-318, and Asn-328. An intramembrane region (pore-forming) is located at residues 358–378 (FAWAFLALFRLMTQDCWERLY). The Extracellular portion of the chain corresponds to 379-386 (QQTLRSAG). The chain crosses the membrane as a helical span at residues 387 to 413 (KIYMIFFMLVIFLGSFYLVNLILAVVA). Over 414 to 719 (MAYEEQNQAT…VKFVVMDPFA (306 aa)) the chain is Cytoplasmic. Residues Ser-457, Ser-460, Ser-483, and Ser-484 each carry the phosphoserine modification. Disordered stretches follow at residues 461 to 575 (LEMS…TQGQ) and 610 to 647 (EATS…TPQA). Residue Thr-486 is modified to Phosphothreonine. Residues 491–503 (DDRLPKSDSEDGP) are compositionally biased toward basic and acidic residues. Residues Ser-497 and Ser-510 each carry the phosphoserine modification. Residues 507 to 528 (NQLSLTHGLSRTSMRPRSSRGS) are compositionally biased toward polar residues. Arg-526 carries the post-translational modification Dimethylated arginine; alternate. Arg-526 carries the post-translational modification Omega-N-methylarginine; alternate. Phosphoserine occurs at positions 539 and 571. Ser-664 and Ser-667 each carry phosphoserine. The II repeat unit spans residues 699 to 971 (CCPLWMSIKQ…QLALARIQRG (273 aa)). The chain crosses the membrane as a helical span at residues 720–737 (DLTITMCIVLNTLFMALE). Residues 738-746 (HYNMTAEFE) lie on the Extracellular side of the membrane. Asn-740 is a glycosylation site (N-linked (GlcNAc...) asparagine). The chain crosses the membrane as a helical span at residues 747–769 (EMLQVGNLVFTGIFTAEMTFKII). Residues 770–775 (ALDPYY) lie on the Cytoplasmic side of the membrane. Residues 776 to 796 (YFQQGWNIFDSIIVILSLMEL) traverse the membrane as a helical segment. At 797 to 806 (GLSRMGNLSV) the chain is on the extracellular side. Asn-803 carries N-linked (GlcNAc...) asparagine glycosylation. The helical transmembrane segment at 807-821 (LRSFRLLRVFKLAKS) threads the bilayer. Over 822–838 (WPTLNTLIKIIGNSVGA) the chain is Cytoplasmic. Residues 839–860 (LGNLTLVLAIIVFIFAVVGMQL) traverse the membrane as a helical segment. Topologically, residues 861–886 (FGKNYSELRHRISDSGLLPRWHMMDF) are extracellular. Asn-864 is a glycosylation site (N-linked (GlcNAc...) asparagine). Residues 887–905 (FHAFLIIFRILCGEWIETM) constitute an intramembrane region (pore-forming). At 906–914 (WDCMEVSGQ) the chain is on the extracellular side. Cys-908 and Cys-917 form a disulfide bridge. A helical membrane pass occupies residues 915–943 (SLCLLVFLLVMVIGNLVVLNLFLALLLSS). Residues 944 to 1205 (FSADNLTAPD…LRKTCYRIVE (262 aa)) are Cytoplasmic-facing. Positions 1000–1144 (HSQLPSCIAA…EDSYSEGSTA (145 aa)) are disordered. The segment covering 1017–1036 (EVEKAPPARKETRFEEDKRP) has biased composition (basic and acidic residues). Acidic residues predominate over residues 1056–1075 (SDTDDQEEDEENSLGTEEEE). A compositionally biased stretch (low complexity) spans 1098–1115 (SQVSETTSSEAEASTSQA). An III repeat occupies 1189–1503 (PGKVWWRLRK…KKYYNAMKKL (315 aa)). Residues 1206 to 1227 (HSWFETFIIFMILLSSGALAFE) traverse the membrane as a helical segment. The Extracellular segment spans residues 1228-1238 (DIYLEERKTIK). The chain crosses the membrane as a helical span at residues 1239 to 1261 (VLLEYADKMFTYVFVLEMLLKWV). Over 1262–1270 (AYGFKKYFT) the chain is Cytoplasmic. The chain crosses the membrane as a helical span at residues 1271–1293 (NAWCWLDFLIVDVSLVSLVANTL). The Extracellular portion of the chain corresponds to 1294 to 1299 (GFAEMG). The helical transmembrane segment at 1300 to 1319 (PIKSLRTLRALRPLRALSRF) threads the bilayer. The Cytoplasmic portion of the chain corresponds to 1320–1332 (EGMRVVVNALVGA). Residues 1333-1357 (IPSIMNVLLVCLIFWLIFSIMGVNL) form a helical membrane-spanning segment. Topologically, residues 1358 to 1402 (FAGKFGRCINQTEGDLPLNYTIVNNKSECESFNVTGELYWTKVKV) are extracellular. N-linked (GlcNAc...) asparagine glycans are attached at residues Asn-1367, Asn-1376, Asn-1382, and Asn-1390. Residues 1403–1424 (NFDNVGAGYLALLQVATFKGWM) constitute an intramembrane region (pore-forming). Over 1425 to 1447 (DIMYAAVDSRGYEEQPQWEDNLY) the chain is Extracellular. The helical transmembrane segment at 1448-1472 (MYIYFVVFIIFGSFFTLNLFIGVII) threads the bilayer. At 1473–1530 (DNFNQQKKKLGGQDIFMTEEQKKYYNAMKKLGSKKPQKPIPRPLNKYQGFIFDIVTKQ) the chain is on the cytoplasmic side. Ser-1505 carries the phosphoserine; by PKC modification. An IV repeat occupies 1512-1809 (IPRPLNKYQG…WEKFDPEATQ (298 aa)). A helical membrane pass occupies residues 1531 to 1549 (AFDVTIMFLICLNMVTMMV). Topologically, residues 1550–1560 (ETDDQSPEKVN) are extracellular. The helical transmembrane segment at 1561-1582 (ILAKINLLFVAIFTGECIVKMA) threads the bilayer. Residues 1583–1591 (ALRHYYFTN) lie on the Cytoplasmic side of the membrane. Residues 1592-1614 (SWNIFDFVVVILSIVGTVLSDII) traverse the membrane as a helical segment. The Extracellular portion of the chain corresponds to 1615-1621 (QKYFFSP). The chain crosses the membrane as a helical span at residues 1622–1642 (TLFRVIRLARIGRILRLIRGA). Residues 1643-1652 (KGIRTLLFAL) lie on the Cytoplasmic side of the membrane. A helical transmembrane segment spans residues 1653–1681 (MMSLPALFNIGLLLFLVMFIYSIFGMANF). The Extracellular portion of the chain corresponds to 1682 to 1699 (AYVKWEAGIDDMFNFQTF). The pore-forming intramembrane region spans 1700–1716 (ANSMLCLFQITTSAGWD). Over 1717–1747 (GLLSPILNTGPPYCDPNLPNSNGSRGNCGSP) the chain is Extracellular. The helical transmembrane segment at 1748-1773 (AVGILFFTTYIIISFLIVVNMYIAII) threads the bilayer. Over 1774-2019 (LENFSVATEE…SPDRDRESIV (246 aa)) the chain is Cytoplasmic. Residues 1841 to 1903 (DLPMVSGDRI…ITTTLRRKHE (63 aa)) form an interaction with FGF13 region. One can recognise an IQ domain in the interval 1903 to 1932 (EEVSATVIQRAFRRHLLQRSVKHASFLFRQ). Low complexity predominate over residues 1963–1982 (SGPLSSSSISSTSFPPSYDS). Residues 1963 to 2019 (SGPLSSSSISSTSFPPSYDSVTRATSDNLPVRASDYSRSEDLADFPPSPDRDRESIV) form a disordered region. An interaction with NEDD4, NEDD4L and WWP2 region spans residues 1977–1980 (PPSY).

Belongs to the sodium channel (TC 1.A.1.10) family. Nav1.5/SCN5A subfamily. Cannot form the same regulatory interactions with beta subunits as other Navs do. Interacts with the PDZ domain of the syntrophin SNTA1, SNTB1 and SNTB2. Interacts with NEDD4, NEDD4L, WWP2 and GPD1L. Interacts with CALM. Interacts with FGF13; the interaction is direct and may regulate SNC5A density at membranes and function. Interacts with FGF12 and FGF14. Interacts with ANK3. Interacts with PKP2 (via N-terminus). Interacts with TMEM233. Interacts with XIRP2; the interaction is required for normal action potential configuration in the heart. In terms of processing, phosphorylation at Ser-1505 by PKC in a highly conserved cytoplasmic loop slows inactivation of the sodium channel and reduces peak sodium currents. Regulated through phosphorylation by CaMK2D. Post-translationally, ubiquitinated by NEDD4L; which promotes its endocytosis. Does not seem to be ubiquitinated by NEDD4 or WWP2. Lacks the cysteine which covalently binds the conotoxin GVIIJ. This cysteine (position 868) is speculated in other sodium channel subunits alpha to be implied in covalent binding with the sodium channel subunit beta-2 or beta-4. In terms of processing, N-glycosylated at Asn-318, probably hinders potential interaction with regulatory subunits. As to expression, expressed in the myocardium (at protein level).

It localises to the cell membrane. The protein resides in the cytoplasm. Its subcellular location is the perinuclear region. The protein localises to the sarcolemma. It is found in the T-tubule. It localises to the cell junction. The catalysed reaction is Na(+)(in) = Na(+)(out). With respect to regulation, channel inactivation is regulated by intracellular calcium levels. It is a tetrodotoxin-resistant voltage-gated Na(+) channel (Nav). In terms of biological role, pore-forming subunit of Nav1.5, a voltage-gated sodium (Nav) channel that directly mediates the depolarizing phase of action potentials in excitable membranes. Navs, also called VGSCs (voltage-gated sodium channels) or VDSCs (voltage-dependent sodium channels), operate by switching between closed and open conformations depending on the voltage difference across the membrane. In the open conformation they allow Na(+) ions to selectively pass through the pore, along their electrochemical gradient. The influx of Na(+) ions provokes membrane depolarization, initiating the propagation of electrical signals throughout cells and tissues. Nav1.5 is the predominant sodium channel expressed in myocardial cells and it is responsible for the initial upstroke of the action potential in cardiac myocytes, thereby initiating the heartbeat. Required for normal electrical conduction including formation of the infranodal ventricular conduction system and normal action potential configuration, as a result of its interaction with XIRP2. This chain is Sodium channel protein type 5 subunit alpha, found in Mus musculus (Mouse).